A 1342-amino-acid polypeptide reads, in one-letter code: DNA-directed RNA polymerase subunit beta (1342 aa).

This sequence belongs to the RNA polymerase beta chain family. As to quaternary structure, the RNAP catalytic core consists of 2 alpha, 1 beta, 1 beta' and 1 omega subunit. When a sigma factor is associated with the core the holoenzyme is formed, which can initiate transcription.

It carries out the reaction RNA(n) + a ribonucleoside 5'-triphosphate = RNA(n+1) + diphosphate. In terms of biological role, DNA-dependent RNA polymerase catalyzes the transcription of DNA into RNA using the four ribonucleoside triphosphates as substrates. The sequence is that of DNA-directed RNA polymerase subunit beta from Edwardsiella ictaluri (strain 93-146).